The following is a 749-amino-acid chain: RNA-binding protein 5-B (749 aa).

The interval 1–88 is disordered; the sequence is MGSDKRVSRS…YHSDGDYMDH (88 aa). The RRM 1 domain occupies 102-182; that stretch reads KTIMLRGLPI…KTIAMHYSNP (81 aa). Residues 185-214 form a RanBP2-type zinc finger; sequence KFEDWLCNKCGLYNFRRRLKCFRCGAAKAE. Residues 241–325 enclose the RRM 2 domain; that stretch reads SAIILRNIGP…KTIGVDFAKS (85 aa). Disordered regions lie at residues 425–471, 520–558, 570–595, and 626–680; these read QMYQ…SVPD, PAAD…AQQI, NKQK…ESAA, and TEEE…NSNI. Positions 429-460 are enriched in low complexity; that stretch reads QPGSPTQSGTSTAASTTPASTTSTEEATTPTA. Basic and acidic residues-rich tracts occupy residues 585–594 and 627–648; these read SRDEERKESA and EEEK…EKYG. In terms of domain architecture, G-patch spans 677–723; it reads NSNIGNKMLQAMGWKEGSGLGRKSQGITAPIQAQVRMRGAGLGAKGS.

Belongs to the RBM5/RBM10 family. As to quaternary structure, component of the spliceosome A complex (also known as the prespliceosome). Appears to dissociate from the spliceosome upon formation of the spliceosome B complex (also known as the precatalytic spliceosome), in which the heterotrimeric U4/U6.U5 snRNPs are bound.

It is found in the nucleus. Functionally, component of the spliceosome A complex. Regulates alternative splicing of a number of mRNAs. May modulate splice site pairing after recruitment of the U1 and U2 snRNPs to the 5' and 3' splice sites of the intron. The polypeptide is RNA-binding protein 5-B (rbm5-b) (Xenopus laevis (African clawed frog)).